A 257-amino-acid polypeptide reads, in one-letter code: 1-(5-phosphoribosyl)-5-[(5-phosphoribosylamino)methylideneamino] imidazole-4-carboxamide isomerase (257 aa).

Catalysis depends on aspartate 8, which acts as the Proton acceptor. The active-site Proton donor is the aspartate 129.

Belongs to the HisA/HisF family.

Its subcellular location is the cytoplasm. The catalysed reaction is 1-(5-phospho-beta-D-ribosyl)-5-[(5-phospho-beta-D-ribosylamino)methylideneamino]imidazole-4-carboxamide = 5-[(5-phospho-1-deoxy-D-ribulos-1-ylimino)methylamino]-1-(5-phospho-beta-D-ribosyl)imidazole-4-carboxamide. Its pathway is amino-acid biosynthesis; L-histidine biosynthesis; L-histidine from 5-phospho-alpha-D-ribose 1-diphosphate: step 4/9. The chain is 1-(5-phosphoribosyl)-5-[(5-phosphoribosylamino)methylideneamino] imidazole-4-carboxamide isomerase from Trichodesmium erythraeum (strain IMS101).